The following is a 79-amino-acid chain: MKTLLLTLVMVTIMCLDLGYTLTCYKGYHDTVVCKPHETICYEYFIPATHGNAILARGCGTSCPGGIRPVCCRTDLSNK.

The signal sequence occupies residues 1-21 (MKTLLLTLVMVTIMCLDLGYT). Intrachain disulfides connect C24/C41, C34/C59, and C63/C71.

It belongs to the three-finger toxin family. Short-chain subfamily. Type III alpha-neurotoxin sub-subfamily. As to expression, expressed by the venom gland.

The protein localises to the secreted. Functionally, binds with high affinity to muscle nicotinic acetylcholine receptor (nAChR) and hinders acetylcholine binding to the receptor, thereby impairing neuromuscular transmission. Causes muscle paralysis, spasms and increased respiration. The polypeptide is Short neurotoxin 4 (Pseudonaja textilis (Eastern brown snake)).